Reading from the N-terminus, the 514-residue chain is Tryptophan decarboxylase 1 (514 aa).

Serotonin is bound at residue F104. Pyridoxal 5'-phosphate-binding residues include T175 and S176. H214 provides a ligand contact to serotonin. T273 contributes to the pyridoxal 5'-phosphate binding site. K330 carries the post-translational modification N6-(pyridoxal phosphate)lysine. The Proton donor role is filled by Y359. Pyridoxal 5'-phosphate-binding residues include V380 and G381.

The protein belongs to the group II decarboxylase family. In terms of assembly, forms homodimers. Pyridoxal 5'-phosphate serves as cofactor.

It catalyses the reaction L-tryptophan + H(+) = tryptamine + CO2. The enzyme catalyses 5-hydroxy-L-tryptophan + H(+) = serotonin + CO2. Involved in serotonin biosynthesis. Catalyzes the decarboxylation of L-tryptophan to produce tryptamine, which is converted to serotonin by tryptamine 5-hydroxylase. May play a major role in serotonin biosynthesis during senescence. Accumulation of serotonin attenuates leaf senescence. Catalyzes the decarboxylation of 5-hydroxy-L-tryptophan to produce serotonin. The sequence is that of Tryptophan decarboxylase 1 from Oryza sativa subsp. japonica (Rice).